We begin with the raw amino-acid sequence, 164 residues long: Dehydrin Rab16C (164 aa).

A compositionally biased stretch (gly residues) spans 42–51 (MGGHHAGAGG). The disordered stretch occupies residues 42 to 164 (MGGHHAGAGG…KIKEKLPGQH (123 aa)). Residues 105 to 115 (GNNQQQQQMMG) show a composition bias toward low complexity. Residues 128–138 (GMTGAGTGTGV) show a composition bias toward gly residues. Residues 147-164 (GEKKGFMDKIKEKLPGQH) are compositionally biased toward basic and acidic residues.

It belongs to the plant dehydrin family.

The protein is Dehydrin Rab16C (RAB16C) of Oryza sativa subsp. japonica (Rice).